The primary structure comprises 488 residues: Ribulose bisphosphate carboxylase large chain (488 aa).

Asparagine 127 and threonine 177 together coordinate substrate. Residue lysine 179 is the Proton acceptor of the active site. Substrate is bound at residue lysine 181. Lysine 205, aspartate 207, and glutamate 208 together coordinate Mg(2+). N6-carboxylysine is present on lysine 205. Histidine 297 acts as the Proton acceptor in catalysis. 3 residues coordinate substrate: arginine 298, histidine 330, and serine 382.

Belongs to the RuBisCO large chain family. Type I subfamily. In terms of assembly, heterohexadecamer of 8 large chains and 8 small chains. Mg(2+) is required as a cofactor.

The protein localises to the plastid. Its subcellular location is the chloroplast. The enzyme catalyses 2 (2R)-3-phosphoglycerate + 2 H(+) = D-ribulose 1,5-bisphosphate + CO2 + H2O. It carries out the reaction D-ribulose 1,5-bisphosphate + O2 = 2-phosphoglycolate + (2R)-3-phosphoglycerate + 2 H(+). In terms of biological role, ruBisCO catalyzes two reactions: the carboxylation of D-ribulose 1,5-bisphosphate, the primary event in carbon dioxide fixation, as well as the oxidative fragmentation of the pentose substrate in the photorespiration process. Both reactions occur simultaneously and in competition at the same active site. In Olisthodiscus luteus (Marine phytoflagellate), this protein is Ribulose bisphosphate carboxylase large chain.